Here is a 235-residue protein sequence, read N- to C-terminus: MKNLVKLSLIAMLTAATLPAMAAKSEPYTHQGTNAREMLVEQPIHWISVDQLKKELEGKAPMNISFDIDETVLFSSPCFYHGQQKYSPGKQDYLKNQDFWNEVNAGCDQYSIPKQIAVDLINMHQERGDQIYFITGRTAEDKDGVTPVLQKAFNIKNMHPVEFMGGRDRTTKYNKTPGIIEHKVTIHYGDSDDDILAAKEAGVRGIRLMRAANSTYQPMPTLGGYGEEVLINSSY.

Positions 1-22 (MKNLVKLSLIAMLTAATLPAMA) are cleaved as a signal peptide. Asp67 acts as the Nucleophile in catalysis. Mg(2+) is bound by residues Asp67 and Asp69. Residue Asp69 is the Proton donor of the active site. Residues 135 to 136 (TG) and Lys175 contribute to the substrate site. Residue Asp190 participates in Mg(2+) binding.

The protein belongs to the class B bacterial acid phosphatase family. Homotetramer. Requires Mg(2+) as cofactor.

The protein localises to the periplasm. It carries out the reaction a phosphate monoester + H2O = an alcohol + phosphate. Dephosphorylates several organic phosphate monoesters. Also has a phosphotransferase activity catalyzing the transfer of low-energy phosphate groups from organic phosphate monoesters to free hydroxyl groups of various organic compounds. The protein is Class B acid phosphatase of Aggregatibacter actinomycetemcomitans serotype C (strain D11S-1) (Actinobacillus actinomycetemcomitans).